The sequence spans 480 residues: Probable WRKY transcription factor 61 (480 aa).

Positions 30–108 are disordered; the sequence is NQLMAKHNEP…RNYDDNEKSS (79 aa). Composition is skewed to basic and acidic residues over residues 57–66 and 84–106; these read REKVNEREEL and NKEE…DNEK. Residues 185-251 constitute a DNA-binding region (WRKY); the sequence is CETPTMNDGC…YEGTHNHPLP (67 aa).

The protein resides in the nucleus. Its function is as follows. Transcription factor. Interacts specifically with the W box (5'-(T)TGAC[CT]-3'), a frequently occurring elicitor-responsive cis-acting element. The protein is Probable WRKY transcription factor 61 (WRKY61) of Arabidopsis thaliana (Mouse-ear cress).